Reading from the N-terminus, the 541-residue chain is Acyl-CoA ligase M9 (541 aa).

An AMP-binding site is contributed by 186 to 197 (AMSTSGTTGLPK). The tract at residues 445 to 519 (ELEAVLHQMP…DSLPRNSSGK (75 aa)) is AMP-binding.

This sequence belongs to the ATP-dependent AMP-binding enzyme family.

The protein operates within secondary metabolite biosynthesis. In terms of biological role, acyl-CoA ligase; part of the gene cluster that mediates the biosynthesis of squalestatin S1 (SQS1, also known as zaragozic acid A), a heavily oxidized fungal polyketide that offers potent cholesterol lowering activity by targeting squalene synthase (SS). SQS1 is composed of a 2,8-dioxobicyclic[3.2.1]octane-3,4,5-tricarboxyclic acid core that is connected to two lipophilic polyketide arms. These initial steps feature the priming of an unusual benzoic acid starter unit onto the highly reducing polyketide synthase pks2, followed by oxaloacetate extension and product release to generate a tricarboxylic acid containing product. The phenylalanine ammonia lyase (PAL) M7 and the acyl-CoA ligase M9 are involved in transforming phenylalanine into benzoyl-CoA. The citrate synthase-like protein R3 is involved in connecting the C-alpha-carbons of the hexaketide chain and oxaloacetate to afford the tricarboxylic acid unit. The potential hydrolytic enzymes, M8 and M10, are in close proximity to pks2 and may participate in product release. On the other side, the tetraketide arm is synthesized by a the squalestatin tetraketide synthase pks1 and enzymatically esterified to the core in the last biosynthetic step, by the acetyltransferase M4. The biosynthesis of the tetraketide must involve 3 rounds of chain extension. After the first and second rounds methyl-transfer occurs, and in all rounds of extension the ketoreductase and dehydratase are active. The enoyl reductase and C-MeT of pks1 are not active in the final round of extension. The acetyltransferase M4 appears to have a broad substrate selectivity for its acyl CoA substrate, allowing the in vitro synthesis of novel squalestatins. The biosynthesis of SQS1 requires several oxidative steps likely performed by oxidoreductases M1, R1 and R2. Finally, in support of the identification of the cluster as being responsible for SQS1 production, the cluster contains a gene encoding a putative squalene synthase (SS) R6, suggesting a likely mechanism for self-resistance. The polypeptide is Acyl-CoA ligase M9 (Phoma sp. (strain ATCC 20986 / MF5453)).